Here is a 950-residue protein sequence, read N- to C-terminus: Glycine dehydrogenase (decarboxylating) (950 aa).

An N6-(pyridoxal phosphate)lysine modification is found at Lys698.

The protein belongs to the GcvP family. In terms of assembly, the glycine cleavage system is composed of four proteins: P, T, L and H. The cofactor is pyridoxal 5'-phosphate.

The enzyme catalyses N(6)-[(R)-lipoyl]-L-lysyl-[glycine-cleavage complex H protein] + glycine + H(+) = N(6)-[(R)-S(8)-aminomethyldihydrolipoyl]-L-lysyl-[glycine-cleavage complex H protein] + CO2. Functionally, the glycine cleavage system catalyzes the degradation of glycine. The P protein binds the alpha-amino group of glycine through its pyridoxal phosphate cofactor; CO(2) is released and the remaining methylamine moiety is then transferred to the lipoamide cofactor of the H protein. The chain is Glycine dehydrogenase (decarboxylating) from Neisseria meningitidis serogroup C / serotype 2a (strain ATCC 700532 / DSM 15464 / FAM18).